We begin with the raw amino-acid sequence, 271 residues long: Protein FAM110D (271 aa).

Disordered regions lie at residues 1–83, 116–145, and 186–245; these read MLLA…RPDS, PRDA…APEA, and PQSW…PVSV. Residues 68–78 show a composition bias toward basic residues; that stretch reads RPVRRGSGRRL. The span at 116 to 126 shows a compositional bias: low complexity; that stretch reads PRDAAPSSPAS. Over residues 220–231 the composition is skewed to gly residues; sequence SPGGAGGGGGSE.

This sequence belongs to the FAM110 family.

This chain is Protein FAM110D (FAM110D), found in Homo sapiens (Human).